The sequence spans 239 residues: 7-cyano-7-deazaguanine synthase (239 aa).

13-23 (FSGGQDSTTCL) contacts ATP. Positions 192, 201, 204, and 207 each coordinate Zn(2+).

The protein belongs to the QueC family. Zn(2+) serves as cofactor.

The enzyme catalyses 7-carboxy-7-deazaguanine + NH4(+) + ATP = 7-cyano-7-deazaguanine + ADP + phosphate + H2O + H(+). Its pathway is purine metabolism; 7-cyano-7-deazaguanine biosynthesis. Functionally, catalyzes the ATP-dependent conversion of 7-carboxy-7-deazaguanine (CDG) to 7-cyano-7-deazaguanine (preQ(0)). The sequence is that of 7-cyano-7-deazaguanine synthase from Shewanella sp. (strain MR-4).